Consider the following 70-residue polypeptide: uncharacterized protein (70 aa).

This is an uncharacterized protein from Homo sapiens (Human).